Consider the following 264-residue polypeptide: Glutamate racemase (264 aa).

Residues 10–11 (DS) and 42–43 (YG) contribute to the substrate site. C73 acts as the Proton donor/acceptor in catalysis. 74-75 (NT) contacts substrate. The Proton donor/acceptor role is filled by C183. A substrate-binding site is contributed by 184–185 (TH).

This sequence belongs to the aspartate/glutamate racemases family.

It carries out the reaction L-glutamate = D-glutamate. Its pathway is cell wall biogenesis; peptidoglycan biosynthesis. In terms of biological role, provides the (R)-glutamate required for cell wall biosynthesis. In Streptococcus pyogenes serotype M4 (strain MGAS10750), this protein is Glutamate racemase.